Here is a 347-residue protein sequence, read N- to C-terminus: tRNA pseudouridine synthase D (347 aa).

D78 (nucleophile) is an active-site residue. Positions 150 to 304 (GLPNFFGPQR…AEGTRRAARL (155 aa)) constitute a TRUD domain.

The protein belongs to the pseudouridine synthase TruD family.

It carries out the reaction uridine(13) in tRNA = pseudouridine(13) in tRNA. Functionally, responsible for synthesis of pseudouridine from uracil-13 in transfer RNAs. The chain is tRNA pseudouridine synthase D from Anaeromyxobacter dehalogenans (strain 2CP-C).